A 154-amino-acid chain; its full sequence is MTESERALLTFEQLFDTSRAIYKKQKKILEIVLEPFDITVLQYLLMFKIHQSGSTPLSKLAMSLDLKPASVTRMTDILYKRQLMNRYDSPDDRRIVMIQLTEEGEELIEKAAVQYAKMGAGLYQKLDTSQLQYLRKLAGSLTKLAEGCSEKSGN.

Residues 1–143 form the HTH marR-type domain; sequence MTESERALLT…LRKLAGSLTK (143 aa). A DNA-binding region (H-T-H motif) is located at residues 57–80; that stretch reads LSKLAMSLDLKPASVTRMTDILYK.

This is an uncharacterized protein from Bacillus subtilis (strain 168).